Here is a 94-residue protein sequence, read N- to C-terminus: Immune protein Tsi6 (94 aa).

In terms of biological role, immunity protein that plays a role in preventing early activation of toxin Tse6. The sequence is that of Immune protein Tsi6 from Pseudomonas aeruginosa (strain ATCC 15692 / DSM 22644 / CIP 104116 / JCM 14847 / LMG 12228 / 1C / PRS 101 / PAO1).